Here is a 432-residue protein sequence, read N- to C-terminus: D-amino acid dehydrogenase (432 aa).

3–17 (VVILGSGVVGVTSAW) provides a ligand contact to FAD.

Belongs to the DadA oxidoreductase family. The cofactor is FAD.

The enzyme catalyses a D-alpha-amino acid + A + H2O = a 2-oxocarboxylate + AH2 + NH4(+). Its pathway is amino-acid degradation; D-alanine degradation; NH(3) and pyruvate from D-alanine: step 1/1. Its function is as follows. Oxidative deamination of D-amino acids. This Salmonella dublin (strain CT_02021853) protein is D-amino acid dehydrogenase.